A 1651-amino-acid polypeptide reads, in one-letter code: A.superbus venom factor 2 (1651 aa).

A signal peptide spans 1–22 (MEGMALYLVAALLIGFPGSSHG). Residue asparagine 189 is glycosylated (N-linked (GlcNAc...) asparagine). 4 residues coordinate Mg(2+): proline 519, aspartate 542, valine 543, and aspartate 545. 12 disulfide bridges follow: cysteine 547–cysteine 808, cysteine 616–cysteine 651, cysteine 684–cysteine 711, cysteine 685–cysteine 718, cysteine 698–cysteine 719, cysteine 864–cysteine 1501, cysteine 1346–cysteine 1477, cysteine 1377–cysteine 1446, cysteine 1494–cysteine 1499, cysteine 1506–cysteine 1578, cysteine 1525–cysteine 1649, and cysteine 1625–cysteine 1634. A propeptide spanning residues 657-739 (RRRRSSVLLL…QRESELFLAR (83 aa)) is cleaved from the precursor. The interval 661–739 (SSVLLLDSKA…QRESELFLAR (79 aa)) is C3a-like domain. Positions 684-719 (CCEDGMHENPMGYTCEKRAKYTQEGDACKAAFLECC) constitute an Anaphylatoxin-like domain. The factor B binding site stretch occupies residues 743–754 (EDEFFEEDNIIS). Residues 992–1269 (HLIITPSGSG…VMVFQALAEY (278 aa)) constitute a propeptide that is removed on maturation. A C3d-like domain region spans residues 992–1269 (HLIITPSGSG…VMVFQALAEY (278 aa)). Positions 1197-1259 (VLMAASTGRD…GGTYGQTQAT (63 aa)) are factor H binding site. Residues asparagine 1282 and asparagine 1352 are each glycosylated (N-linked (GlcNAc...) asparagine). Residues 1506–1649 (CSLLNQQKKI…LSNTLTIFGC (144 aa)) form the NTR domain.

Belongs to the venom complement C3 homolog family. As to quaternary structure, heterotrimer of alpha, beta and gamma chains; disulfide-linked. Is active with factor B in the presence of factor D. Post-translationally, first processed by the removal of 4 Arg residues by furin-type protease, forming two chains, alpha and gamma/beta precursor, linked by a disulfide bond. This mature AVF is composed of three chains: alpha, gamma and beta. In terms of tissue distribution, expressed by the venom gland.

It localises to the secreted. Its function is as follows. Complement-activating protein in snake venom. It is a structural and functional analog of complement component C3b, the activated form of C3. It binds factor B (CFB), which is subsequently cleaved by factor D (CFD) to form the bimolecular complex AVF/Bb. AVF/Bb is a C3 convertase that cleaves complement component C3, but not C5 (as do CVF/Bb). The polypeptide is A.superbus venom factor 2 (Austrelaps superbus (Lowland copperhead snake)).